A 464-amino-acid polypeptide reads, in one-letter code: Trigger factor (464 aa).

One can recognise a PPIase FKBP-type domain in the interval 162–243; the sequence is GDFISIDLSA…VGTVKERELP (82 aa). Positions 435-464 are disordered; sequence ELFGNGEAETEEAASTDEAASDSTESEDQK.

It belongs to the FKBP-type PPIase family. Tig subfamily.

It is found in the cytoplasm. It carries out the reaction [protein]-peptidylproline (omega=180) = [protein]-peptidylproline (omega=0). Involved in protein export. Acts as a chaperone by maintaining the newly synthesized protein in an open conformation. Functions as a peptidyl-prolyl cis-trans isomerase. The polypeptide is Trigger factor (Rhodococcus jostii (strain RHA1)).